The sequence spans 312 residues: Zinc transporter ZitB (312 aa).

The next 5 membrane-spanning stretches (helical) occupy residues 21 to 41, 48 to 68, 90 to 110, 123 to 143, and 164 to 184; these read LLFA…GGIL, LADA…LLVV, AAFV…WEAI, LMMV…WILH, and LLGS…GWTP.

Belongs to the cation diffusion facilitator (CDF) transporter (TC 2.A.4) family. SLC30A subfamily.

Its subcellular location is the cell inner membrane. In terms of biological role, involved in zinc efflux across the cytoplasmic membrane, thus reducing zinc accumulation in the cytoplasm and rendering bacteria more resistant to zinc. It may contribute to zinc homeostasis at low concentrations of zinc. In Salmonella typhi, this protein is Zinc transporter ZitB.